The following is a 638-amino-acid chain: MRSSWADSAANAEESAPAAAANHGNSRLPRSSYVPPHLRGQAAPAAPAQAGALPSAAAAAQPSVGQPGVVGGPRWAGIVNGGGGGGGGSVGGSRQGFGAGGRGGGGGGGGGAWNSRPGGWDRRDREPDPFANSEAAEVDFEGENTGINFEAYEDIPVETSGHDVPPPANTFAEIDLGDALNENIRRCKYVKPTPVQRYAIPISIAGRDLMACAQTGSGKTAAFCFPIISGIMRSRPPPRSRGSRTAYPLALILSPTRELSVQIHEEARKFAYQTGVKVVVAYGGAPITQQLRELERGVEILVATPGRLMDLLERARVSLQMIKYLALDEADRMLDMGFEPQIRKIVEQMDMPPRGERQTMLFSATFPKEIQRMASDFLADYIFLAVGRVGSSTDLIVQRVEFVLDADKRSYLMDLLHAQRANGTHGKQALTLVFVETKRGADALENWLYNNGFPATSIHGDRTQQEREYALRSFKSGATPILVATDVAARGLDIPHVAHVINFDLPNDIDDYVHRIGRTGRAGKSGLATAFFNESNTPLARPLSELMQEANQEVPQWLERYAARSSFGGGGGRNRRSGGGARFGGRDFRRDRGSGGGGYGGGGGGYGGGGYGGGGGGGGYGGGSSYGGGGQGFSSAWD.

Low complexity-rich tracts occupy residues 1–21 (MRSS…AAAA) and 40–67 (GQAA…VGQP). Residues 1 to 129 (MRSSWADSAA…WDRRDREPDP (129 aa)) are disordered. Positions 79 to 112 (VNGGGGGGGGSVGGSRQGFGAGGRGGGGGGGGGA) are enriched in gly residues. A compositionally biased stretch (basic and acidic residues) spans 119-128 (GWDRRDREPD). The Q motif motif lies at 169–197 (NTFAEIDLGDALNENIRRCKYVKPTPVQR). Residues 200–384 (IPISIAGRDL…SDFLADYIFL (185 aa)) form the Helicase ATP-binding domain. Residue 213–220 (AQTGSGKT) coordinates ATP. The short motif at 328–331 (DEAD) is the DEAD box element. The region spanning 411-562 (YLMDLLHAQR…EVPQWLERYA (152 aa)) is the Helicase C-terminal domain. Positions 565–638 (SSFGGGGGRN…GGQGFSSAWD (74 aa)) are disordered. Residues 567–583 (FGGGGGRNRRSGGGARF) show a composition bias toward gly residues. Positions 584 to 593 (GGRDFRRDRG) are enriched in basic and acidic residues. The segment covering 594-632 (SGGGGYGGGGGGYGGGGYGGGGGGGGYGGGSSYGGGGQG) has biased composition (gly residues).

This sequence belongs to the DEAD box helicase family. DDX3/DED1 subfamily.

The enzyme catalyses ATP + H2O = ADP + phosphate + H(+). This Oryza sativa subsp. japonica (Rice) protein is DEAD-box ATP-dependent RNA helicase 52B (PL10B).